The primary structure comprises 2604 residues: Probable polyketide synthase 17 (2604 aa).

Residues 11–433 (NDDIAIIGMG…GSNCHMILSE (423 aa)) enclose the Ketosynthase family 3 (KS3) domain. Active-site for beta-ketoacyl synthase activity residues include cysteine 179, histidine 316, and histidine 356. An acyl/malonyl transferases region spans residues 631–664 (GISPSIVVGHSFGEIPSALFSDVISLETAVKIVY). Catalysis depends on serine 641, which acts as the For acyl/malonyl transferase activity. Residues 937 to 1057 (NNLLGHDQFA…GRIGLFKHNP (121 aa)) are N-terminal hotdog fold. The 280-residue stretch at 937 to 1216 (NNLLGHDQFA…CTSLIRLKKQ (280 aa)) folds into the PKS/mFAS DH domain. Histidine 968 (proton acceptor; for dehydratase activity) is an active-site residue. Positions 1072-1216 (SFTTLTKSEV…CTSLIRLKKQ (145 aa)) are C-terminal hotdog fold. Residue aspartate 1132 is the Proton donor; for dehydratase activity of the active site. A disordered region spans residues 1357–1407 (GESEHFSPSNPSSPNDTPRNNSNNCSSKNNAASSDDADDDTNNEETINQLN). Positions 1363–1390 (SPSNPSSPNDTPRNNSNNCSSKNNAASS) are enriched in low complexity. The Carrier domain occupies 2507-2584 (GDSGSTQAKV…SIIQRISSKS (78 aa)). Serine 2544 carries the O-(pantetheine 4'-phosphoryl)serine modification. Over residues 2581–2597 (SSKSTSTSTPNPTNTSK) the composition is skewed to low complexity. A disordered region spans residues 2581 to 2604 (SSKSTSTSTPNPTNTSKQTATKKT).

Requires pantetheine 4'-phosphate as cofactor.

Probable polyketide synthase. This Dictyostelium discoideum (Social amoeba) protein is Probable polyketide synthase 17 (pks17).